Reading from the N-terminus, the 174-residue chain is Interleukin-10 (174 aa).

An N-terminal signal peptide occupies residues 1–16 (MPTWMLLFCLLCVTSS). N-linked (GlcNAc...) asparagine glycosylation occurs at Asn-17. Cystine bridges form between Cys-26–Cys-122 and Cys-76–Cys-128.

Belongs to the IL-10 family. As to quaternary structure, homodimer. Interacts with IL10RA and IL10RB.

The protein resides in the secreted. In terms of biological role, major immune regulatory cytokine that acts on many cells of the immune system where it has profound anti-inflammatory functions, limiting excessive tissue disruption caused by inflammation. Mechanistically, IL10 binds to its heterotetrameric receptor comprising IL10RA and IL10RB leading to JAK1 and STAT2-mediated phosphorylation of STAT3. In turn, STAT3 translocates to the nucleus where it drives expression of anti-inflammatory mediators. Targets antigen-presenting cells (APCs) such as macrophages and monocytes and inhibits their release of pro-inflammatory cytokines including granulocyte-macrophage colony-stimulating factor /GM-CSF, granulocyte colony-stimulating factor/G-CSF, IL-1 alpha, IL-1 beta, IL-6, IL-8 and TNF-alpha. Also interferes with antigen presentation by reducing the expression of MHC-class II and co-stimulatory molecules, thereby inhibiting their ability to induce T cell activation. In addition, controls the inflammatory response of macrophages by reprogramming essential metabolic pathways including mTOR signaling. This Trichosurus vulpecula (Brush-tailed possum) protein is Interleukin-10 (IL10).